Consider the following 173-residue polypeptide: Photosystem I assembly protein Ycf3 (173 aa).

TPR repeat units lie at residues 35–68 (AYVYYRDGLSAQNDGDYAEALENYDEALKLETDP), 72–105 (GETLKNMAIIYMSNGEEERAIETYQKALDENPKQ), and 120–153 (GRIAEESGQQDDADRWFDQAADVWTQAVRLNPGG).

It belongs to the Ycf3 family.

It is found in the cellular thylakoid membrane. Essential for the assembly of the photosystem I (PSI) complex. May act as a chaperone-like factor to guide the assembly of the PSI subunits. This chain is Photosystem I assembly protein Ycf3, found in Synechococcus sp. (strain CC9902).